The sequence spans 337 residues: MQRPRVLSGVQPTGALHLGNWLGAIRNWVDLQSSHDTYVCVVDLHAITVPHDPERLAEESLSTAALYLACGMDPDLCSIFVQSQVSAHSELCWLLNCVTPLNWLERMIQFKEKSVKQGDNVSVGLLDYPVLMAADILLYDADLVPVGEDQKQHLELARDIAQQRINARFGSEEKPVLKVPDPLIIKEGARVMSLSDGRSKMSKSDPNEGSRITLLDPPELITKKIKRAKTDPQMGLQFGNPDRPEADNLLGIYAILSGRGRDAAAQECAEMGWGTFKPLLADATVSALEPIQHRYQQLMGDRIELIRVLDQGRTRAEETAQATLQRVRQALGFLIAS.

ATP-binding positions include 11-13 (QPT) and 19-20 (GN). The 'HIGH' region signature appears at 12-20 (PTGALHLGN). D135 contributes to the L-tryptophan binding site. Residues 147 to 149 (GED), V191, and 200 to 204 (KMSKS) each bind ATP. Residues 200-204 (KMSKS) carry the 'KMSKS' region motif.

The protein belongs to the class-I aminoacyl-tRNA synthetase family. In terms of assembly, homodimer.

The protein localises to the cytoplasm. The catalysed reaction is tRNA(Trp) + L-tryptophan + ATP = L-tryptophyl-tRNA(Trp) + AMP + diphosphate + H(+). Functionally, catalyzes the attachment of tryptophan to tRNA(Trp). The chain is Tryptophan--tRNA ligase from Prochlorococcus marinus (strain MIT 9313).